Reading from the N-terminus, the 155-residue chain is Transcriptional repressor NrdR (155 aa).

A zinc finger lies at 3–34 (CPFCGNVDTQVKDSRPAEDHVAIRRRRFCPAC). An ATP-cone domain is found at 49-139 (LVVIKSSGKR…VYKNFQAADD (91 aa)).

This sequence belongs to the NrdR family. Zn(2+) serves as cofactor.

In terms of biological role, negatively regulates transcription of bacterial ribonucleotide reductase nrd genes and operons by binding to NrdR-boxes. The chain is Transcriptional repressor NrdR from Dinoroseobacter shibae (strain DSM 16493 / NCIMB 14021 / DFL 12).